The sequence spans 307 residues: Ribonuclease Z (307 aa).

Residues His63, His65, Asp67, His68, His141, Asp212, and His270 each coordinate Zn(2+). Residue Asp67 is the Proton acceptor of the active site.

It belongs to the RNase Z family. Homodimer. The cofactor is Zn(2+).

The catalysed reaction is Endonucleolytic cleavage of RNA, removing extra 3' nucleotides from tRNA precursor, generating 3' termini of tRNAs. A 3'-hydroxy group is left at the tRNA terminus and a 5'-phosphoryl group is left at the trailer molecule.. Functionally, zinc phosphodiesterase, which displays some tRNA 3'-processing endonuclease activity. Probably involved in tRNA maturation, by removing a 3'-trailer from precursor tRNA. This is Ribonuclease Z from Bacillus cereus (strain ZK / E33L).